Consider the following 1134-residue polypeptide: Spermatogenesis-associated protein 31C2 (1134 aa).

Residues 23–43 (PWVLDIFLTLVFALGFFFLLL) form a helical membrane-spanning segment. Disordered stretches follow at residues 54-87 (PPSP…NHSL), 115-243 (LEKG…LLTP), 477-504 (PGTS…EAQT), 524-561 (TPQN…DSGS), 727-807 (MPER…PTVP), 928-1007 (NMGH…PSIS), and 1111-1134 (AASS…IRDQ). Over residues 59–87 (PKKRKRHLVSQRPAGRRGRPRGRMKNHSL) the composition is skewed to basic residues. A compositionally biased stretch (basic and acidic residues) spans 132 to 148 (VGKRTPDGASRSSHEPT). A compositionally biased stretch (low complexity) spans 185-201 (SSLSASQPPEPSLLLEH). Residues 204 to 235 (PEPPALFPHPPRTPDPLACSPPPPKGFTPPPL) are compositionally biased toward pro residues. A compositionally biased stretch (polar residues) spans 489–504 (WQSSTSTGESSKEAQT). Composition is skewed to polar residues over residues 773 to 794 (LTYS…SSRA) and 937 to 948 (PNCQGSCKSQSP). The span at 954-970 (HKRENSRKPNLEKHEEM) shows a compositional bias: basic and acidic residues. Polar residues predominate over residues 1111–1124 (AASSQQATLKNQSR). Over residues 1125–1134 (PNRDRQIRDQ) the composition is skewed to basic and acidic residues.

This sequence belongs to the SPATA31 family.

The protein resides in the membrane. Functionally, may play a role in spermatogenesis. The chain is Spermatogenesis-associated protein 31C2 (SPATA31C2) from Homo sapiens (Human).